The sequence spans 505 residues: Glutamate--tRNA ligase (505 aa).

The 'HIGH' region motif lies at 12–22 (PSPTGDPHVGT). Residues 253–257 (KLSKR) carry the 'KMSKS' region motif. Residue K256 coordinates ATP.

It belongs to the class-I aminoacyl-tRNA synthetase family. Glutamate--tRNA ligase type 1 subfamily. Monomer.

The protein resides in the cytoplasm. It catalyses the reaction tRNA(Glu) + L-glutamate + ATP = L-glutamyl-tRNA(Glu) + AMP + diphosphate. Functionally, catalyzes the attachment of glutamate to tRNA(Glu) in a two-step reaction: glutamate is first activated by ATP to form Glu-AMP and then transferred to the acceptor end of tRNA(Glu). The protein is Glutamate--tRNA ligase of Chlamydophila psittaci (strain ATCC VR-125 / 6BC) (Chlamydia psittaci).